Consider the following 119-residue polypeptide: Promotilin (119 aa).

A signal peptide spans 1–25; it reads MVSRKAVVVLLVVHAAAMLASHTEA. The segment at 40-72 is disordered; it reads EKERNKGQKKSLSVQQASEELGPLDPSEPTKEE.

It belongs to the motilin family.

It is found in the secreted. Plays an important role in the regulation of interdigestive gastrointestinal motility and indirectly causes rhythmic contraction of duodenal and colonic smooth muscle. The protein is Promotilin (MLN) of Sus scrofa (Pig).